Reading from the N-terminus, the 392-residue chain is S-adenosylmethionine synthase (392 aa).

His17 provides a ligand contact to ATP. Asp19 serves as a coordination point for Mg(2+). Glu45 serves as a coordination point for K(+). Residues Glu58 and Gln102 each contribute to the L-methionine site. The tract at residues 102 to 112 is flexible loop; the sequence is QSADIAQGVDA. ATP contacts are provided by residues 169–171, 235–236, Asp244, 250–251, Ala267, and Lys271; these read DAK, KF, and RK. Asp244 is a binding site for L-methionine. Lys275 contacts L-methionine.

This sequence belongs to the AdoMet synthase family. As to quaternary structure, homotetramer; dimer of dimers. Mg(2+) is required as a cofactor. K(+) serves as cofactor.

The protein resides in the cytoplasm. The catalysed reaction is L-methionine + ATP + H2O = S-adenosyl-L-methionine + phosphate + diphosphate. The protein operates within amino-acid biosynthesis; S-adenosyl-L-methionine biosynthesis; S-adenosyl-L-methionine from L-methionine: step 1/1. Functionally, catalyzes the formation of S-adenosylmethionine (AdoMet) from methionine and ATP. The overall synthetic reaction is composed of two sequential steps, AdoMet formation and the subsequent tripolyphosphate hydrolysis which occurs prior to release of AdoMet from the enzyme. This chain is S-adenosylmethionine synthase, found in Methylobacterium radiotolerans (strain ATCC 27329 / DSM 1819 / JCM 2831 / NBRC 15690 / NCIMB 10815 / 0-1).